A 365-amino-acid chain; its full sequence is MTVRRVNVVILVLLVVAFLIVLHRNLLNLNDFLNQETSDTVPGMILPFETDFLLGRKAMRSGEEIPVLITAPEERLGAAVTAMNSIYRNSKANVVFNIVTLNESVVHLSTWLSKTDLKHKIIVFDPSILLGKIPTDAQKMETVRPLTFARFYMPAFLPDAEKAIYLDDDVIVQGDIRELFNTSLKSGHVAAFSEDCDSASSKGIVRGAGNQNSYIGYLDFKKEAIKKLGMRANTCSFNPGVFVANLTEWKQQNVTSQLEFWMERNAKEDLYSKTLADCMTTPPMLIVFYKHHSNIDPMWNVRHLGATGAGNRYSAQFVKAAKLLHWNGHYKPWGRTSSFSDIWDKWYIPDPTGKFHPIRKHVEEK.

The Cytoplasmic segment spans residues 1–4; that stretch reads MTVR. The helical; Signal-anchor for type II membrane protein transmembrane segment at 5 to 22 threads the bilayer; the sequence is RVNVVILVLLVVAFLIVL. Topologically, residues 23-365 are lumenal; sequence HRNLLNLNDF…HPIRKHVEEK (343 aa). Residues Asn-102, Asn-181, Asn-245, and Asn-253 are each glycosylated (N-linked (GlcNAc...) asparagine).

Belongs to the glycosyltransferase 8 family.

The protein localises to the membrane. This is Glycosyltransferase 8 domain-containing protein 1 (glt8d1) from Danio rerio (Zebrafish).